A 412-amino-acid polypeptide reads, in one-letter code: Glucose-1-phosphate adenylyltransferase (412 aa).

Alpha-D-glucose 1-phosphate contacts are provided by residues Gly-169, 184 to 185 (EK), and Ser-201.

Belongs to the bacterial/plant glucose-1-phosphate adenylyltransferase family. As to quaternary structure, homotetramer.

It carries out the reaction alpha-D-glucose 1-phosphate + ATP + H(+) = ADP-alpha-D-glucose + diphosphate. It participates in glycan biosynthesis; glycogen biosynthesis. Involved in the biosynthesis of ADP-glucose, a building block required for the elongation reactions to produce glycogen. Catalyzes the reaction between ATP and alpha-D-glucose 1-phosphate (G1P) to produce pyrophosphate and ADP-Glc. The chain is Glucose-1-phosphate adenylyltransferase from Geobacter metallireducens (strain ATCC 53774 / DSM 7210 / GS-15).